Reading from the N-terminus, the 354-residue chain is DNA integrity scanning protein DisA (354 aa).

The DAC domain maps to 6–144 (GMKIKDTLKI…GDIKYVLRDS (139 aa)). Residues Gly73, Leu91, and 104–108 (TRHRT) each bind ATP.

It belongs to the DisA family. As to quaternary structure, homooctamer. The cofactor is Mg(2+).

The enzyme catalyses 2 ATP = 3',3'-c-di-AMP + 2 diphosphate. Its function is as follows. Participates in a DNA-damage check-point that is active prior to asymmetric division when DNA is damaged. DisA forms globular foci that rapidly scan along the chromosomes during sporulation, searching for lesions. When a lesion is present, DisA pauses at the lesion site. This triggers a cellular response that culminates in a temporary block in sporulation initiation. Also has diadenylate cyclase activity, catalyzing the condensation of 2 ATP molecules into cyclic di-AMP (c-di-AMP). c-di-AMP acts as a signaling molecule that couples DNA integrity with progression of sporulation. The rise in c-di-AMP level generated by DisA while scanning the chromosome, operates as a positive signal that advances sporulation; upon encountering a lesion, the DisA focus arrests at the damaged site and halts c-di-AMP synthesis. This Clostridium botulinum (strain Alaska E43 / Type E3) protein is DNA integrity scanning protein DisA.